Consider the following 228-residue polypeptide: Small ribosomal subunit protein uS7A (228 aa).

This sequence belongs to the universal ribosomal protein uS7 family.

The chain is Small ribosomal subunit protein uS7A (RpS5a) from Drosophila melanogaster (Fruit fly).